The sequence spans 346 residues: 3-dehydroquinate synthase (346 aa).

NAD(+)-binding positions include 62-67 (DGEEYK), 96-100 (GVISD), 120-121 (TT), Lys-133, Lys-142, and 160-163 (FLRT). Zn(2+)-binding residues include Glu-175, His-234, and His-251.

The protein belongs to the sugar phosphate cyclases superfamily. Dehydroquinate synthase family. The cofactor is Co(2+). Requires Zn(2+) as cofactor. NAD(+) serves as cofactor.

The protein resides in the cytoplasm. The catalysed reaction is 7-phospho-2-dehydro-3-deoxy-D-arabino-heptonate = 3-dehydroquinate + phosphate. It functions in the pathway metabolic intermediate biosynthesis; chorismate biosynthesis; chorismate from D-erythrose 4-phosphate and phosphoenolpyruvate: step 2/7. Functionally, catalyzes the conversion of 3-deoxy-D-arabino-heptulosonate 7-phosphate (DAHP) to dehydroquinate (DHQ). The sequence is that of 3-dehydroquinate synthase from Campylobacter curvus (strain 525.92).